Consider the following 175-residue polypeptide: Nucleoside diphosphate kinase 6 (175 aa).

ATP is bound by residues K8, F57, R85, T91, R105, and N115. H118 (pros-phosphohistidine intermediate) is an active-site residue.

This sequence belongs to the NDK family. Mg(2+) is required as a cofactor.

It carries out the reaction a 2'-deoxyribonucleoside 5'-diphosphate + ATP = a 2'-deoxyribonucleoside 5'-triphosphate + ADP. It catalyses the reaction a ribonucleoside 5'-diphosphate + ATP = a ribonucleoside 5'-triphosphate + ADP. In terms of biological role, major role in the synthesis of nucleoside triphosphates other than ATP. The ATP gamma phosphate is transferred to the NDP beta phosphate via a ping-pong mechanism, using a phosphorylated active-site intermediate. In Rattus norvegicus (Rat), this protein is Nucleoside diphosphate kinase 6 (Nme6).